The primary structure comprises 66 residues: MDWLAKYWWILVLVFLVGVLLNVIKDLKRIDHKKFLANKPELPPHRDFNDKWDDEDGWPKKDQPKK.

The chain crosses the membrane as a helical span at residues 4 to 24 (LAKYWWILVLVFLVGVLLNVI). The tract at residues 39–66 (KPELPPHRDFNDKWDDEDGWPKKDQPKK) is disordered. Positions 42-66 (LPPHRDFNDKWDDEDGWPKKDQPKK) are enriched in basic and acidic residues.

This sequence belongs to the UPF0370 family.

It is found in the cell membrane. The polypeptide is UPF0370 protein YpfN (Salmonella paratyphi B (strain ATCC BAA-1250 / SPB7)).